The following is a 272-amino-acid chain: Shikimate dehydrogenase (NADP(+)) (272 aa).

Shikimate-binding positions include 14 to 16 (SKS) and threonine 61. The active-site Proton acceptor is lysine 65. NADP(+) is bound at residue glutamate 77. The shikimate site is built by asparagine 86 and aspartate 102. Residues 126-130 (GAGGA), 149-154 (NRTVSR), and methionine 213 contribute to the NADP(+) site. Shikimate is bound at residue tyrosine 215. NADP(+) is bound at residue glycine 237.

Belongs to the shikimate dehydrogenase family. Homodimer.

The enzyme catalyses shikimate + NADP(+) = 3-dehydroshikimate + NADPH + H(+). The protein operates within metabolic intermediate biosynthesis; chorismate biosynthesis; chorismate from D-erythrose 4-phosphate and phosphoenolpyruvate: step 4/7. Functionally, involved in the biosynthesis of the chorismate, which leads to the biosynthesis of aromatic amino acids. Catalyzes the reversible NADPH linked reduction of 3-dehydroshikimate (DHSA) to yield shikimate (SA). The chain is Shikimate dehydrogenase (NADP(+)) from Escherichia coli (strain K12 / MC4100 / BW2952).